Consider the following 311-residue polypeptide: Glycine--tRNA ligase alpha subunit (311 aa).

This sequence belongs to the class-II aminoacyl-tRNA synthetase family. As to quaternary structure, tetramer of two alpha and two beta subunits.

It localises to the cytoplasm. The enzyme catalyses tRNA(Gly) + glycine + ATP = glycyl-tRNA(Gly) + AMP + diphosphate. This is Glycine--tRNA ligase alpha subunit from Rhizobium meliloti (strain 1021) (Ensifer meliloti).